Consider the following 464-residue polypeptide: Arabinose-proton symporter (464 aa).

A run of 12 helical transmembrane segments spans residues 21–43 (GFVILISCAAGLGGLLYGYDTAV), 63–85 (GLVISSIMIGGVVGVGISGFLSD), 92–111 (ILMTAALLFAISAIVSALSQ), 116–138 (LIIARIIGGLGIGMGSSLSVTYI), 150–172 (LSSLYQLFTILGISATYFINLAV), 185–207 (GWRWMLAYGMVPSVIFFLVLLVV), 266–288 (ALVIGILLALFNQVIGMNAITYY), 303–325 (GFVTTCIVGVVEVIFTVIAVLLI), 332–354 (KLMSIGSAFMAIFMILIGTSFYF), 364–386 (VLILGFVAAFCVSVGPITWIMIS), 398–420 (AGIATIFLWGANWAIGQFVPMMI), and 424–446 (GLAYTFWIFAVINILCFLFVVTI).

It belongs to the major facilitator superfamily. Sugar transporter (TC 2.A.1.1) family.

The protein resides in the cell membrane. The catalysed reaction is L-arabinose(in) + H(+)(in) = L-arabinose(out) + H(+)(out). It carries out the reaction D-galactose(in) + H(+)(in) = D-galactose(out) + H(+)(out). The enzyme catalyses D-xylose(in) + H(+)(in) = D-xylose(out) + H(+)(out). Uptake of L-arabinose across the cytoplasmic membrane with the concomitant transport of protons into the cell (symport system). In the presence of inducing amounts of L-arabinose, can import both D-galactose and D-xylose. Can also transport the disaccharide alpha-1,5-arabinobiose. The polypeptide is Arabinose-proton symporter (araE) (Bacillus subtilis (strain 168)).